The sequence spans 290 residues: ATP synthase gamma chain (290 aa).

This sequence belongs to the ATPase gamma chain family. In terms of assembly, F-type ATPases have 2 components, CF(1) - the catalytic core - and CF(0) - the membrane proton channel. CF(1) has five subunits: alpha(3), beta(3), gamma(1), delta(1), epsilon(1). CF(0) has three main subunits: a, b and c.

The protein resides in the cell inner membrane. Produces ATP from ADP in the presence of a proton gradient across the membrane. The gamma chain is believed to be important in regulating ATPase activity and the flow of protons through the CF(0) complex. This chain is ATP synthase gamma chain, found in Anaeromyxobacter sp. (strain K).